Here is a 371-residue protein sequence, read N- to C-terminus: uncharacterized protein (371 aa).

The EH domain maps to 43 to 148 (DESRVPKFYL…VQAFPTASNP (106 aa)). The disordered stretch occupies residues 179–205 (SMRKKKESDSKEVSAHNSPAKGAAHDL).

This is an uncharacterized protein from Caenorhabditis elegans.